A 175-amino-acid chain; its full sequence is Homeobox expressed in ES cells 1 (175 aa).

Positions Met-1–Pro-44 are disordered. Positions Gly-108–His-167 form a DNA-binding region, homeobox.

It belongs to the ANF homeobox family. As to quaternary structure, interacts with TLE1.

Its subcellular location is the nucleus. Required for the normal development of the forebrain, eyes and other anterior structures such as the olfactory placodes and pituitary gland. Possible transcriptional repressor. Binds to the palindromic PIII sequence, 5'-AGCTTGAGTCTAATTGAATTAACTGTAC-3'. In Oryctolagus cuniculus (Rabbit), this protein is Homeobox expressed in ES cells 1 (HESX1).